The primary structure comprises 236 residues: Exotoxin type H (236 aa).

An N-terminal signal peptide occupies residues 1-32 (MRYNCRYSHIDKKIYSMIICLSFLLYSNVVQA).

Belongs to the staphylococcal/streptococcal toxin family.

The protein resides in the secreted. Its function is as follows. Mitogenic for human peripheral blood lymphocytes. This is Exotoxin type H (speH) from Streptococcus pyogenes serotype M1.